A 103-amino-acid polypeptide reads, in one-letter code: Small ribosomal subunit protein uS10 (103 aa).

Belongs to the universal ribosomal protein uS10 family. Part of the 30S ribosomal subunit.

Functionally, involved in the binding of tRNA to the ribosomes. The polypeptide is Small ribosomal subunit protein uS10 (Acinetobacter baumannii (strain AB307-0294)).